We begin with the raw amino-acid sequence, 174 residues long: Cytochrome c-type biogenesis protein CcmE (174 aa).

Topologically, residues 1-8 are cytoplasmic; sequence MNPRRKSR. Residues 9–29 traverse the membrane as a helical; Signal-anchor for type II membrane protein segment; it reads LSVVLFILLGISVASALVLYA. Over 30 to 174 the chain is Periplasmic; that stretch reads LRQNIDLFYT…QEKQFKEGNQ (145 aa). Positions 131 and 135 each coordinate heme. The tract at residues 149 to 174 is disordered; that stretch reads KPMGISDLKNESDRDRQEKQFKEGNQ. Positions 156–174 are enriched in basic and acidic residues; the sequence is LKNESDRDRQEKQFKEGNQ.

The protein belongs to the CcmE/CycJ family.

It localises to the cell inner membrane. Functionally, heme chaperone required for the biogenesis of c-type cytochromes. Transiently binds heme delivered by CcmC and transfers the heme to apo-cytochromes in a process facilitated by CcmF and CcmH. This chain is Cytochrome c-type biogenesis protein CcmE, found in Histophilus somni (strain 2336) (Haemophilus somnus).